Consider the following 154-residue polypeptide: MGALTESQAALVKSSWEEFNANIPKHTHRFFILVLEIAPAAKDLFSFLKGTSEVPQNNPELQAHAGKVFKLVYEAAIQLQVTGVVVTDATLKNLGSVHVSKGVADAHFPVVKEAILKTIKEVVGAKWSEELNSAWTIAYDELAIVIKKEMNDAA.

Residues 3–151 (ALTESQAALV…LAIVIKKEMN (149 aa)) form the Globin domain. Ser-46 provides a ligand contact to heme b. Phosphoserine is present on Ser-46. An O2-binding site is contributed by His-64. Residues Lys-67, His-98, and Lys-101 each contribute to the heme b site. Nitrated tyrosine is present on Tyr-139.

This sequence belongs to the plant globin family. In terms of assembly, monomer. Nitrated in effective nodules and particularly in hypoxic conditions; this mechanism may play a protective role in the symbiosis by buffering toxic peroxynitrite NO(2)(-). Nitration level decrease during nodule senescence. In terms of processing, phosphorylation at Ser-46 disrupts the molecular environment of its porphyrin ring oxygen binding pocket, thus leading to a reduced oxygen consumption and to the delivery of oxygen O(2) to symbiosomes. As to expression, root nodules.

It is found in the cytoplasm. The protein localises to the cytosol. It localises to the nucleus. Its function is as follows. Leghemoglobin that reversibly binds oxygen O(2) through a pentacoordinated heme iron. In root nodules, facilitates the diffusion of oxygen to the bacteroids while preventing the bacterial nitrogenase from being inactivated by buffering dioxygen, nitric oxide and carbon monoxide, and promoting the formation of reactive oxygen species (ROS, e.g. H(2)O(2)). This role is essential for symbiotic nitrogen fixation (SNF). In Lupinus luteus (European yellow lupine), this protein is Leghemoglobin-2.